The sequence spans 138 residues: Small ribosomal subunit protein uS12m (138 aa).

A mitochondrion-targeting transit peptide spans 1-29 (MSWSGLLHGLNTSLTCGPALVPRLWATCS). The disordered stretch occupies residues 36 to 56 (MHRLGPPKRPPRKLGPTEGRP).

Belongs to the universal ribosomal protein uS12 family. In terms of assembly, component of the mitochondrial small ribosomal subunit (mt-SSU). Mature mammalian 55S mitochondrial ribosomes consist of a small (28S) and a large (39S) subunit. The 28S small subunit contains a 12S ribosomal RNA (12S mt-rRNA) and 30 different proteins. The 39S large subunit contains a 16S rRNA (16S mt-rRNA), a copy of mitochondrial valine transfer RNA (mt-tRNA(Val)), which plays an integral structural role, and 52 different proteins.

The protein resides in the mitochondrion. This is Small ribosomal subunit protein uS12m (MRPS12) from Homo sapiens (Human).